The sequence spans 495 residues: GTPase Der (495 aa).

EngA-type G domains follow at residues 3–166 and 208–381; these read PVIA…MDAE and IKLA…DCST. Residues 9–16, 56–60, 118–121, 214–221, 261–265, and 326–329 each bind GTP; these read GRPNVGKS, DTGGI, NKTD, DTAGV, and NKWD. Residues 382–466 form the KH-like domain; it reads KRVGTSLLTR…PIRIQFKEGE (85 aa).

Belongs to the TRAFAC class TrmE-Era-EngA-EngB-Septin-like GTPase superfamily. EngA (Der) GTPase family. As to quaternary structure, associates with the 50S ribosomal subunit.

Functionally, GTPase that plays an essential role in the late steps of ribosome biogenesis. This is GTPase Der from Yersinia pseudotuberculosis serotype O:3 (strain YPIII).